A 153-amino-acid polypeptide reads, in one-letter code: Nuclear cap-binding protein subunit 2 (153 aa).

MRNA contacts are provided by residues Y17, Y40, 109-113 (RTDWD), 120-124 (RQYGR), and 130-131 (QV). The RRM domain occupies 37 to 115 (CTLYVGNLSF…RIVRTDWDAG (79 aa)).

Belongs to the RRM NCBP2 family. As to quaternary structure, component of the nuclear cap-binding complex (CBC), a heterodimer composed of ncbp1/cbp80 and ncbp2/cbp20 that interacts with m7GpppG-capped RNA.

The protein resides in the nucleus. It is found in the cytoplasm. Functionally, component of the cap-binding complex (CBC), which binds co-transcriptionally to the 5' cap of pre-mRNAs and is involved in various processes such as pre-mRNA splicing, translation regulation, nonsense-mediated mRNA decay, RNA-mediated gene silencing (RNAi) by microRNAs (miRNAs) and mRNA export. The CBC complex is involved in mRNA export from the nucleus, leading to the recruitment of the mRNA export machinery to the 5' end of mRNA and to mRNA export in a 5' to 3' direction through the nuclear pore. The CBC complex is also involved in mediating U snRNA and intronless mRNAs export from the nucleus. The CBC complex is essential for a pioneer round of mRNA translation, before steady state translation when the CBC complex is replaced by cytoplasmic cap-binding protein eIF4E. The pioneer round of mRNA translation mediated by the CBC complex plays a central role in nonsense-mediated mRNA decay (NMD), NMD only taking place in mRNAs bound to the CBC complex, but not on eIF4E-bound mRNAs. The CBC complex enhances NMD in mRNAs containing at least one exon-junction complex (EJC), promoting the interaction between upf1 and upf2. The CBC complex is also involved in 'failsafe' NMD, which is independent of the EJC complex, while it does not participate in Staufen-mediated mRNA decay (SMD). During cell proliferation, the CBC complex is also involved in microRNAs (miRNAs) biogenesis via its interaction with srrt/ars2, thereby being required for miRNA-mediated RNA interference. The CBC complex also acts as a negative regulator of parn, thereby acting as an inhibitor of mRNA deadenylation. In the CBC complex, ncbp2/cbp20 recognizes and binds capped RNAs (m7GpppG-capped RNA) but requires ncbp1/cbp80 to stabilize the movement of its N-terminal loop and lock the CBC into a high affinity cap-binding state with the cap structure. The conventional cap-binding complex with NCBP2 binds both small nuclear RNA (snRNA) and messenger (mRNA) and is involved in their export from the nucleus. This chain is Nuclear cap-binding protein subunit 2 (ncbp2), found in Xenopus laevis (African clawed frog).